The sequence spans 65 residues: Venom protein Vn4.6 (65 aa).

The signal sequence occupies residues 1 to 23; that stretch reads MSKIILAIFLIVLCGLIFVTVDA.

In terms of processing, contains 2 disulfide bonds. Expressed by the venom gland.

It is found in the secreted. In terms of biological role, endoparasitoid venom protein that interferes with the activation of host hemolymph prophenoloxidase. May act in conjunction with other venom proteins (such as Vn50), by competitive binding to the zymogen and thereby interrupting the enzyme. This is Venom protein Vn4.6 from Cotesia rubecula (Cabbage white butterfly parasite).